Consider the following 453-residue polypeptide: BPI fold-containing family B member 6 (453 aa).

The N-terminal stretch at 1 to 18 (MLRILCLALCSLLTGTRA) is a signal peptide. A glycan (N-linked (GlcNAc...) asparagine) is linked at asparagine 114. A disulfide bridge links cysteine 137 with cysteine 174. N-linked (GlcNAc...) asparagine glycosylation occurs at asparagine 190.

This sequence belongs to the BPI/LBP/Plunc superfamily. BPI/LBP family. As to expression, detected at very low levels in normal tonsils, and at higher levels in hypertrophic tonsils.

It localises to the secreted. This chain is BPI fold-containing family B member 6 (BPIFB6), found in Homo sapiens (Human).